Consider the following 315-residue polypeptide: MNYLDFESKIKEIEDKITSLSHVYEDEKTESEIKKLGKKRLELMESTYSKLTDWQVVQLSRHPDRPYFKDLLSLVFTDFQELHGDRAFGDDLAVIGGLAKLNNKPVMVIGQEKGRDTKSKIKHNFGMMHPEGYRKALRLMKLAEKFNMPIVTFIDTPGAYPGIKAEERGQSEAIARNLLEMSALKVPVVCIVIGEGCSGGALGIGVGDRLLMLQYSYFATISPEGCASILHKTAEKASEVTQMMNITSGRLKELEIVDAVIPEPLGGAHRDYDTTAANIRKAVAAELKVLSEMTVEERNAKRYDKLMSFGRFKEA.

The CoA carboxyltransferase C-terminal domain occupies 36 to 289 (LGKKRLELME…RKAVAAELKV (254 aa)).

The protein belongs to the AccA family. In terms of assembly, acetyl-CoA carboxylase is a heterohexamer composed of biotin carboxyl carrier protein (AccB), biotin carboxylase (AccC) and two subunits each of ACCase subunit alpha (AccA) and ACCase subunit beta (AccD).

The protein localises to the cytoplasm. The enzyme catalyses N(6)-carboxybiotinyl-L-lysyl-[protein] + acetyl-CoA = N(6)-biotinyl-L-lysyl-[protein] + malonyl-CoA. The protein operates within lipid metabolism; malonyl-CoA biosynthesis; malonyl-CoA from acetyl-CoA: step 1/1. In terms of biological role, component of the acetyl coenzyme A carboxylase (ACC) complex. First, biotin carboxylase catalyzes the carboxylation of biotin on its carrier protein (BCCP) and then the CO(2) group is transferred by the carboxyltransferase to acetyl-CoA to form malonyl-CoA. This Francisella philomiragia subsp. philomiragia (strain ATCC 25017 / CCUG 19701 / FSC 153 / O#319-036) protein is Acetyl-coenzyme A carboxylase carboxyl transferase subunit alpha.